The sequence spans 359 residues: uncharacterized protein (359 aa).

This is an uncharacterized protein from Dictyostelium discoideum (Social amoeba).